The following is a 345-amino-acid chain: Beta-2-glycoprotein 1 (345 aa).

The first 19 residues, 1–19 (MPPPALVLLLGFLCHVAIA), serve as a signal peptide directing secretion. 4 consecutive Sushi domains span residues 21 to 81 (RTCP…KCMP), 82 to 139 (RVCP…VCAP), 140 to 202 (ITCP…ECRE), and 203 to 262 (VRCP…SCKA). Intrachain disulfides connect C23–C66, C51–C79, C84–C124, C110–C137, C142–C188, C174–C200, C205–C248, C234–C260, C264–C315, C300–C325, and C307–C345. Residue T33 is glycosylated (O-linked (GalNAc...) threonine). N92 is a glycosylation site (N-linked (GlcNAc...) asparagine). Residues N162, N183, and N193 are each glycosylated (N-linked (GlcNAc...) asparagine). The N-linked (GlcNAc...) asparagine glycan is linked to N253. Positions 263 to 345 (SCKLSIKRAT…KTDASDVKPC (83 aa)) are sushi-like.

Expressed by the liver and secreted in plasma.

The protein resides in the secreted. In terms of biological role, binds to various kinds of negatively charged substances such as heparin, phospholipids, and dextran sulfate. May prevent activation of the intrinsic blood coagulation cascade by binding to phospholipids on the surface of damaged cells. This chain is Beta-2-glycoprotein 1 (APOH), found in Bos taurus (Bovine).